Reading from the N-terminus, the 280-residue chain is Tobamovirus multiplication protein 2A (280 aa).

The Cytoplasmic portion of the chain corresponds to 1–13 (MACRGCLECLLKL). Residues 14–34 (LNFLLAVAGLGMIGYGIYLFV) traverse the membrane as a helical segment. Topologically, residues 35-78 (EYKRVTDNSVTFDLTNGDQSYVSFGRPILMAVSLSSNIFDNLPK) are extracellular. A helical transmembrane segment spans residues 79 to 99 (AWFIYLFIGIGVALFVISCCG). The Cytoplasmic portion of the chain corresponds to 100 to 113 (CVGTCSRSVCCLSC). Residues 114–134 (YSLLLILLILVELGFAAFIFF) form a helical membrane-spanning segment. The Extracellular segment spans residues 135-162 (DNSWRDELPSDRTGNFDTIYNFLRENWK). The helical transmembrane segment at 163 to 183 (IVRWVALGAVVFEALLFLLAL) threads the bilayer. Over 184 to 280 (MVRAANTPAE…NEEKGRCTIM (97 aa)) the chain is Cytoplasmic. Phosphoserine occurs at positions 196 and 233. Positions 258–280 (SESHRFQQMPAQPNEEKGRCTIM) are disordered. The span at 271-280 (NEEKGRCTIM) shows a compositional bias: basic and acidic residues.

The protein belongs to the tetraspanin (TM4SF) family. Homodimer. Constituent of tobamovirus replication complex. Interacts with TOM1. As to expression, expressed in rosette leaves.

The protein resides in the vacuole membrane. Functionally, necessary for the efficient intracellular multiplication of tobamoviruses, being a component of the replication complex. This Arabidopsis thaliana (Mouse-ear cress) protein is Tobamovirus multiplication protein 2A (TOM2A).